Reading from the N-terminus, the 526-residue chain is ATP synthase subunit alpha (526 aa).

Residue 171–178 coordinates ATP; the sequence is GDRQTGKT.

This sequence belongs to the ATPase alpha/beta chains family. As to quaternary structure, F-type ATPases have 2 components, CF(1) - the catalytic core - and CF(0) - the membrane proton channel. CF(1) has five subunits: alpha(3), beta(3), gamma(1), delta(1), epsilon(1). CF(0) has four main subunits: a, b, b' and c.

The protein localises to the cell inner membrane. The catalysed reaction is ATP + H2O + 4 H(+)(in) = ADP + phosphate + 5 H(+)(out). Its function is as follows. Produces ATP from ADP in the presence of a proton gradient across the membrane. The alpha chain is a regulatory subunit. The protein is ATP synthase subunit alpha of Chlorobium limicola (strain DSM 245 / NBRC 103803 / 6330).